The chain runs to 311 residues: Forkhead box protein R2 (311 aa).

Disordered regions lie at residues 56–76 (PPEMPQKRRPSPDGDGPPCEP) and 90–171 (LGSQ…QSPE). The span at 115–128 (QKDEGSNCSEDKVV) shows a compositional bias: basic and acidic residues. A compositionally biased stretch (low complexity) spans 129–143 (ESLPSSSSEQSPLQK). Acidic residues predominate over residues 153-164 (ELTEEEAEEPDD). Positions 192–294 (RPPLNCSHLI…RVLAFAQRER (103 aa)) form a DNA-binding region, fork-head.

Expressed in breast cancer cell lines and primary cancer.

Its subcellular location is the nucleus. The chain is Forkhead box protein R2 (FOXR2) from Homo sapiens (Human).